A 512-amino-acid polypeptide reads, in one-letter code: ADP,ATP carrier protein 4 (512 aa).

12 consecutive transmembrane segments (helical) span residues 34-54 (ISKF…QNLI), 71-91 (ISFL…VMYV), 102-122 (IFYL…YVIF), 157-177 (FSLF…LLFW), 192-212 (FYPL…HFLE), 231-251 (FHTL…IVSI), 296-316 (LIAT…GPWK), 330-350 (AAFI…FVLL), 361-381 (FTSA…FFAF), 390-410 (LIIA…IGAI), 448-468 (VIGT…IFII), and 476-496 (SISI…IWAT).

Belongs to the ADP/ATP translocase tlc family.

Its subcellular location is the cell membrane. Its function is as follows. Provides the rickettsial cell with host ATP in exchange for rickettsial ADP. This is an obligate exchange system. This energy acquiring activity is an important component of rickettsial parasitism. The protein is ADP,ATP carrier protein 4 (tlcD) of Rickettsia typhi (strain ATCC VR-144 / Wilmington).